A 597-amino-acid polypeptide reads, in one-letter code: Probable potassium transport system protein Kup 1 (597 aa).

Helical transmembrane passes span 23-43 (GAWL…DSVL), 72-92 (LTMM…SRGT), 98-118 (VFGS…VVAI), 143-163 (ATGL…EALY), 174-194 (IYFT…GQGA), 226-246 (AVVL…TGAF), 273-293 (LYIP…LLLF), 303-323 (YGLA…IYLW), 329-349 (FGAV…FAAS), and 353-373 (FLHG…IMYT).

This sequence belongs to the HAK/KUP transporter (TC 2.A.72) family.

It localises to the cell membrane. The enzyme catalyses K(+)(in) + H(+)(in) = K(+)(out) + H(+)(out). Its function is as follows. Transport of potassium into the cell. Likely operates as a K(+):H(+) symporter. The protein is Probable potassium transport system protein Kup 1 (kup1) of Bifidobacterium longum (strain NCC 2705).